Reading from the N-terminus, the 129-residue chain is Small ribosomal subunit protein bS6 (129 aa).

The protein belongs to the bacterial ribosomal protein bS6 family.

Functionally, binds together with bS18 to 16S ribosomal RNA. This is Small ribosomal subunit protein bS6 from Microcystis aeruginosa (strain NIES-843 / IAM M-2473).